The following is a 447-amino-acid chain: UPF0210 protein LAF_0976 (447 aa).

The protein belongs to the UPF0210 family. As to quaternary structure, homodimer.

The protein is UPF0210 protein LAF_0976 of Limosilactobacillus fermentum (strain NBRC 3956 / LMG 18251) (Lactobacillus fermentum).